The following is a 182-amino-acid chain: CDP-diacylglycerol--glycerol-3-phosphate 3-phosphatidyltransferase (182 aa).

The Cytoplasmic segment spans residues 1–12 (MQLNIPTWLTLF). A helical membrane pass occupies residues 13 to 37 (RVVLIPFFVLAFYLPFVWAPMVCAI). At 38–60 (IFVFAAATDWFDGFLARRWKQTT) the chain is on the periplasmic side. Residues 61–81 (RFGAFLDPVADKVMVAVALVL) form a helical membrane-spanning segment. The Cytoplasmic portion of the chain corresponds to 82 to 86 (VAEHY). A helical membrane pass occupies residues 87–107 (HSWWITLPAATMIAREIIISS). Topologically, residues 108 to 145 (LREWMAEIGKRSSVAVSWVGKVKTMAQMGSLVGLLWRP) are periplasmic. Residues 146-168 (DHNVELASFVLLYIAAVLTFWSM) traverse the membrane as a helical segment. Topologically, residues 169 to 181 (FQYLNAAWSDLLE) are cytoplasmic.

Belongs to the CDP-alcohol phosphatidyltransferase class-I family.

It localises to the cell inner membrane. The enzyme catalyses a CDP-1,2-diacyl-sn-glycerol + sn-glycerol 3-phosphate = a 1,2-diacyl-sn-glycero-3-phospho-(1'-sn-glycero-3'-phosphate) + CMP + H(+). The protein operates within phospholipid metabolism; phosphatidylglycerol biosynthesis; phosphatidylglycerol from CDP-diacylglycerol: step 1/2. In terms of biological role, catalyzes the conversion of cytidine diphosphate diacylglycerol (CDP-DG) and glycerol 3-phosphate into phosphatidylglycerol. Essential for the synthesis of anionic phospholipids, thereby playing a role in balancing the ratio of zwitterionic and anionic phospholipids, which is thought to be important for normal membrane function. This chain is CDP-diacylglycerol--glycerol-3-phosphate 3-phosphatidyltransferase, found in Yersinia pestis bv. Antiqua (strain Antiqua).